The chain runs to 81 residues: Defensin-like protein 130 (81 aa).

A signal peptide spans 1–21 (MTKNTSLTIFMVVLVIGMLYT). Disulfide bonds link Cys-32–Cys-81, Cys-41–Cys-63, Cys-46–Cys-75, and Cys-50–Cys-77.

It belongs to the DEFL family.

Its subcellular location is the secreted. This chain is Defensin-like protein 130 (LCR28), found in Arabidopsis thaliana (Mouse-ear cress).